The following is a 202-amino-acid chain: dTTP/UTP pyrophosphatase (202 aa).

The active-site Proton acceptor is Asp71.

The protein belongs to the Maf family. YhdE subfamily. A divalent metal cation is required as a cofactor.

It is found in the cytoplasm. The catalysed reaction is dTTP + H2O = dTMP + diphosphate + H(+). It carries out the reaction UTP + H2O = UMP + diphosphate + H(+). Nucleoside triphosphate pyrophosphatase that hydrolyzes dTTP and UTP. May have a dual role in cell division arrest and in preventing the incorporation of modified nucleotides into cellular nucleic acids. The chain is dTTP/UTP pyrophosphatase from Zymomonas mobilis subsp. mobilis (strain ATCC 31821 / ZM4 / CP4).